We begin with the raw amino-acid sequence, 176 residues long: Shikimate kinase (176 aa).

12–17 provides a ligand contact to ATP; sequence GSGKST. Residue S16 participates in Mg(2+) binding. Residues D34, R58, and G80 each coordinate substrate. Residue R117 participates in ATP binding. R136 contributes to the substrate binding site. Position 153 (R153) interacts with ATP.

This sequence belongs to the shikimate kinase family. In terms of assembly, monomer. The cofactor is Mg(2+).

The protein localises to the cytoplasm. It catalyses the reaction shikimate + ATP = 3-phosphoshikimate + ADP + H(+). It functions in the pathway metabolic intermediate biosynthesis; chorismate biosynthesis; chorismate from D-erythrose 4-phosphate and phosphoenolpyruvate: step 5/7. Its function is as follows. Catalyzes the specific phosphorylation of the 3-hydroxyl group of shikimic acid using ATP as a cosubstrate. This Mycobacterium bovis (strain ATCC BAA-935 / AF2122/97) protein is Shikimate kinase.